The sequence spans 187 residues: NADH-quinone oxidoreductase subunit B (187 aa).

Positions 46, 47, 112, and 141 each coordinate [4Fe-4S] cluster.

Belongs to the complex I 20 kDa subunit family. NDH-1 is composed of 14 different subunits. Subunits NuoB, C, D, E, F, and G constitute the peripheral sector of the complex. [4Fe-4S] cluster is required as a cofactor.

The protein resides in the cell inner membrane. The enzyme catalyses a quinone + NADH + 5 H(+)(in) = a quinol + NAD(+) + 4 H(+)(out). NDH-1 shuttles electrons from NADH, via FMN and iron-sulfur (Fe-S) centers, to quinones in the respiratory chain. The immediate electron acceptor for the enzyme in this species is believed to be ubiquinone. Couples the redox reaction to proton translocation (for every two electrons transferred, four hydrogen ions are translocated across the cytoplasmic membrane), and thus conserves the redox energy in a proton gradient. The protein is NADH-quinone oxidoreductase subunit B of Myxococcus xanthus (strain DK1622).